The sequence spans 80 residues: Small ribosomal subunit protein bS18 (80 aa).

This sequence belongs to the bacterial ribosomal protein bS18 family. Part of the 30S ribosomal subunit. Forms a tight heterodimer with protein bS6.

In terms of biological role, binds as a heterodimer with protein bS6 to the central domain of the 16S rRNA, where it helps stabilize the platform of the 30S subunit. This chain is Small ribosomal subunit protein bS18, found in Clostridium perfringens (strain ATCC 13124 / DSM 756 / JCM 1290 / NCIMB 6125 / NCTC 8237 / Type A).